The sequence spans 285 residues: MSSGRLLLGATPLGQPSDASPRLAAALATADVVAAEDTRRVRKLAKALDIRIGGRVVSLFDRVEALRVTALLDAINNGATVLVVSDAGTPVISDPGYRLVAACIDAGVSVTCLPGPSAVTTALVISGLPAEKFCFEGFAPRKGAARRAWLAELAEERRTCVFFESPRRLAACLNDAVEQLGGARPAAICRELTKVHEEVVRGSLDELAIWAAGGVLGEITVVVAGAAPHAELSSLIAQVEEFVAAGIRVKDACSEVAAAHPGVRTRQLYDAVLQSRRETGGPAQP.

This sequence belongs to the methyltransferase superfamily. RsmI family.

The protein resides in the cytoplasm. The enzyme catalyses cytidine(1402) in 16S rRNA + S-adenosyl-L-methionine = 2'-O-methylcytidine(1402) in 16S rRNA + S-adenosyl-L-homocysteine + H(+). Catalyzes the 2'-O-methylation of the ribose of cytidine 1402 (C1402) in 16S rRNA. This Mycobacterium tuberculosis (strain CDC 1551 / Oshkosh) protein is Ribosomal RNA small subunit methyltransferase I.